Consider the following 190-residue polypeptide: MSRALLKYIRLSPTKARLVARQVQGMNAEIAIASLEFTPNKAARVISKVIASAVANGGYDAQDVIILSCRVDAGPVLRRFMPRAKGRATPIRKPMAHILVEVGTQKSVQQSVQSTKAKAKGAKNIKSEDSKNSLKVTESKADSKVDAAQKASTTQEKAESKTKVAKAKVATTKSTATRKTTKKKTEGEEK.

The interval 111–190 is disordered; sequence SVQSTKAKAK…TKKKTEGEEK (80 aa). Residues 125-147 are compositionally biased toward basic and acidic residues; it reads IKSEDSKNSLKVTESKADSKVDA. Residues 167 to 178 are compositionally biased toward low complexity; the sequence is AKVATTKSTATR.

Belongs to the universal ribosomal protein uL22 family. In terms of assembly, part of the 50S ribosomal subunit.

In terms of biological role, this protein binds specifically to 23S rRNA; its binding is stimulated by other ribosomal proteins, e.g. L4, L17, and L20. It is important during the early stages of 50S assembly. It makes multiple contacts with different domains of the 23S rRNA in the assembled 50S subunit and ribosome. The globular domain of the protein is located near the polypeptide exit tunnel on the outside of the subunit, while an extended beta-hairpin is found that lines the wall of the exit tunnel in the center of the 70S ribosome. The polypeptide is Large ribosomal subunit protein uL22 (Helicobacter hepaticus (strain ATCC 51449 / 3B1)).